The sequence spans 389 residues: Succinate--CoA ligase [ADP-forming] subunit beta (389 aa).

Residues 9–244 (KQLLAEYGIP…KTQEDETEVT (236 aa)) form the ATP-grasp domain. Residues Lys46, 53-55 (GRG), Gly102, and Glu107 contribute to the ATP site. Positions 199 and 213 each coordinate Mg(2+). Residues Asn264 and 321–323 (GIV) each bind substrate.

It belongs to the succinate/malate CoA ligase beta subunit family. As to quaternary structure, heterotetramer of two alpha and two beta subunits. It depends on Mg(2+) as a cofactor.

It carries out the reaction succinate + ATP + CoA = succinyl-CoA + ADP + phosphate. The enzyme catalyses GTP + succinate + CoA = succinyl-CoA + GDP + phosphate. Its pathway is carbohydrate metabolism; tricarboxylic acid cycle; succinate from succinyl-CoA (ligase route): step 1/1. In terms of biological role, succinyl-CoA synthetase functions in the citric acid cycle (TCA), coupling the hydrolysis of succinyl-CoA to the synthesis of either ATP or GTP and thus represents the only step of substrate-level phosphorylation in the TCA. The beta subunit provides nucleotide specificity of the enzyme and binds the substrate succinate, while the binding sites for coenzyme A and phosphate are found in the alpha subunit. In Xanthomonas campestris pv. campestris (strain 8004), this protein is Succinate--CoA ligase [ADP-forming] subunit beta.